The following is a 34-amino-acid chain: Photosystem I reaction center subunit XII (34 aa).

The helical transmembrane segment at 4–24 (VLSAPEVFIALVVAAHAAVLA) threads the bilayer.

This sequence belongs to the PsaM family.

Its subcellular location is the cellular thylakoid membrane. This is Photosystem I reaction center subunit XII from Synechococcus sp. (strain CC9605).